Here is a 253-residue protein sequence, read N- to C-terminus: tRNA1(Val) (adenine(37)-N6)-methyltransferase (253 aa).

It belongs to the methyltransferase superfamily. tRNA (adenine-N(6)-)-methyltransferase family.

The protein resides in the cytoplasm. It carries out the reaction adenosine(37) in tRNA1(Val) + S-adenosyl-L-methionine = N(6)-methyladenosine(37) in tRNA1(Val) + S-adenosyl-L-homocysteine + H(+). In terms of biological role, specifically methylates the adenine in position 37 of tRNA(1)(Val) (anticodon cmo5UAC). The sequence is that of tRNA1(Val) (adenine(37)-N6)-methyltransferase from Dickeya chrysanthemi (strain Ech1591) (Dickeya zeae (strain Ech1591)).